We begin with the raw amino-acid sequence, 388 residues long: Mannitol-1-phosphate 5-dehydrogenase (388 aa).

5–16 (AVHFGGGNIGRG) contributes to the NAD(+) binding site. Residue K213 is part of the active site.

This sequence belongs to the mannitol dehydrogenase family. Monomer.

It catalyses the reaction D-mannitol 1-phosphate + NAD(+) = beta-D-fructose 6-phosphate + NADH + H(+). In terms of biological role, catalyzes the NAD(H)-dependent interconversion of D-fructose 6-phosphate and D-mannitol 1-phosphate in the mannitol metabolic pathway. This is Mannitol-1-phosphate 5-dehydrogenase from Coccidioides immitis (strain RS) (Valley fever fungus).